A 279-amino-acid polypeptide reads, in one-letter code: Large ribosomal subunit protein uL2 (279 aa).

Disordered stretches follow at residues 31 to 61 (KSLL…HKRH) and 222 to 279 (GMAM…RNAK). Residues 49–61 (KTSRHRGGGHKRH) are compositionally biased toward basic residues. Residues 232 to 242 (MGGGEGKSKSG) show a composition bias toward gly residues. Basic residues predominate over residues 259–268 (LKTRNRKKAS).

The protein belongs to the universal ribosomal protein uL2 family. Part of the 50S ribosomal subunit. Forms a bridge to the 30S subunit in the 70S ribosome.

Its function is as follows. One of the primary rRNA binding proteins. Required for association of the 30S and 50S subunits to form the 70S ribosome, for tRNA binding and peptide bond formation. It has been suggested to have peptidyltransferase activity; this is somewhat controversial. Makes several contacts with the 16S rRNA in the 70S ribosome. The chain is Large ribosomal subunit protein uL2 from Chlorobium chlorochromatii (strain CaD3).